A 97-amino-acid chain; its full sequence is Large ribosomal subunit protein uL23 (97 aa).

It belongs to the universal ribosomal protein uL23 family. As to quaternary structure, part of the 50S ribosomal subunit. Contacts protein L29, and trigger factor when it is bound to the ribosome.

Functionally, one of the early assembly proteins it binds 23S rRNA. One of the proteins that surrounds the polypeptide exit tunnel on the outside of the ribosome. Forms the main docking site for trigger factor binding to the ribosome. The polypeptide is Large ribosomal subunit protein uL23 (Clostridium botulinum (strain ATCC 19397 / Type A)).